The sequence spans 347 residues: GMP reductase (347 aa).

Position 108–131 (108–131) interacts with NADP(+); the sequence is ADFEKTVQILALNPALNFVCIDVA. Residues glycine 181 and glycine 183 each contribute to the K(+) site. Cysteine 186 serves as the catalytic Thioimidate intermediate. 216–239 contacts NADP(+); it reads IVSDGGCTMPGDVAKAFGGGADFV.

This sequence belongs to the IMPDH/GMPR family. GuaC type 1 subfamily. As to quaternary structure, homotetramer.

It carries out the reaction IMP + NH4(+) + NADP(+) = GMP + NADPH + 2 H(+). In terms of biological role, catalyzes the irreversible NADPH-dependent deamination of GMP to IMP. It functions in the conversion of nucleobase, nucleoside and nucleotide derivatives of G to A nucleotides, and in maintaining the intracellular balance of A and G nucleotides. This chain is GMP reductase, found in Salmonella paratyphi A (strain ATCC 9150 / SARB42).